The following is a 174-amino-acid chain: Nicotinamide-nucleotide adenylyltransferase (174 aa).

Belongs to the archaeal NMN adenylyltransferase family.

It localises to the cytoplasm. The catalysed reaction is beta-nicotinamide D-ribonucleotide + ATP + H(+) = diphosphate + NAD(+). It participates in cofactor biosynthesis; NAD(+) biosynthesis; NAD(+) from nicotinamide D-ribonucleotide: step 1/1. The polypeptide is Nicotinamide-nucleotide adenylyltransferase (Archaeoglobus fulgidus (strain ATCC 49558 / DSM 4304 / JCM 9628 / NBRC 100126 / VC-16)).